We begin with the raw amino-acid sequence, 612 residues long: Phosphomethylpyrimidine synthase (612 aa).

Disordered stretches follow at residues Met-1–Gly-33 and Ala-105–Asn-146. Low complexity predominate over residues Thr-12–Thr-24. Positions Ala-105 to Lys-117 are enriched in basic and acidic residues. Residues Asn-213, Met-242, Tyr-271, His-307, Ser-327–Gly-329, Asp-368–Arg-371, and Glu-407 contribute to the substrate site. His-411 is a binding site for Zn(2+). Tyr-434 is a substrate binding site. His-475 provides a ligand contact to Zn(2+). The [4Fe-4S] cluster site is built by Cys-555, Cys-558, and Cys-563.

It belongs to the ThiC family. The cofactor is [4Fe-4S] cluster.

It catalyses the reaction 5-amino-1-(5-phospho-beta-D-ribosyl)imidazole + S-adenosyl-L-methionine = 4-amino-2-methyl-5-(phosphooxymethyl)pyrimidine + CO + 5'-deoxyadenosine + formate + L-methionine + 3 H(+). It functions in the pathway cofactor biosynthesis; thiamine diphosphate biosynthesis. Catalyzes the synthesis of the hydroxymethylpyrimidine phosphate (HMP-P) moiety of thiamine from aminoimidazole ribotide (AIR) in a radical S-adenosyl-L-methionine (SAM)-dependent reaction. In Streptomyces coelicolor (strain ATCC BAA-471 / A3(2) / M145), this protein is Phosphomethylpyrimidine synthase.